Here is a 300-residue protein sequence, read N- to C-terminus: Arginine/serine-rich protein 1 (300 aa).

Residues 1–142 (MSSAAVSKYV…RGRSHHRRSY (142 aa)) form a disordered region. Ser17 is modified (phosphoserine). Residues 23-36 (SPSTSGSGRSSRLS) show a composition bias toward low complexity. The span at 37–104 (SRSRSRSSSR…RSRSRSRGHR (68 aa)) shows a compositional bias: basic residues. A compositionally biased stretch (basic and acidic residues) spans 105–115 (YYRDSRYEQPR). Low complexity predominate over residues 116–125 (RYYQSPSPYR). Phosphoserine occurs at positions 120 and 122. A compositionally biased stretch (basic residues) spans 126–141 (SRSRSRSRGRSHHRRS). Position 147 is an omega-N-methylarginine (Arg147). Residues 222–300 (QGAVSCSGPK…KSPYGLWIPV (79 aa)) are disordered. Positions 268–277 (PLEKTTKAAV) are enriched in basic and acidic residues. At Ser284 the chain carries Phosphoserine.

Belongs to the RSRP family. Post-translationally, phosphorylated. Phosphorylation at Ser-120 and Ser-122 mediates the interaction with spliceosome proteins.

Its subcellular location is the nucleus. Probably acts as a spliceosomal factor that contributes to spliceosome assembly and regulates the isoform switching of proteins such as PARP6. This chain is Arginine/serine-rich protein 1 (Rsrp1), found in Rattus norvegicus (Rat).